Here is a 340-residue protein sequence, read N- to C-terminus: MVREEVAVSTRTLQWKCVESRTDSNRLYYGRFVLSPLMKGQADTIGIAMRKALLGEIEGTCITRAKSEKVPHEYSTIVGIEESVHEILMNLKEIVLKSNLYGTRDASICVRGPKYVTAQDIISPPSVEIVDTTQHIASLTEPINLCIELQIERDRGYRMKAPNNYQDGSYPIDAVSMPVRNANHSIHSYGSGNEKQEILFLEIWTNGSLTPKEALHEASRNLIDLFIPFLHAEEQDIHLNLEDNQNRFTVSPFTLHDRLGNIRKNKKEIALKCIFIDQSELPTRTYNCLKRSNIHTLLDLLNNSQEDLMRIEHFRIEDIKQILDILQKHFGIDLPKNKRF.

An alpha N-terminal domain (alpha-NTD) region spans residues 1–233; sequence MVREEVAVST…DLFIPFLHAE (233 aa). The interval 266-340 is alpha C-terminal domain (alpha-CTD); it reads KKEIALKCIF…GIDLPKNKRF (75 aa).

Belongs to the RNA polymerase alpha chain family. In plastids the minimal PEP RNA polymerase catalytic core is composed of four subunits: alpha, beta, beta', and beta''. When a (nuclear-encoded) sigma factor is associated with the core the holoenzyme is formed, which can initiate transcription.

The protein resides in the plastid. Its subcellular location is the chloroplast. The enzyme catalyses RNA(n) + a ribonucleoside 5'-triphosphate = RNA(n+1) + diphosphate. Its function is as follows. DNA-dependent RNA polymerase catalyzes the transcription of DNA into RNA using the four ribonucleoside triphosphates as substrates. This Calycanthus floridus var. glaucus (Eastern sweetshrub) protein is DNA-directed RNA polymerase subunit alpha.